The sequence spans 467 residues: Immunoglobulin superfamily member 21 (467 aa).

Residues 1–24 form the signal peptide; that stretch reads MRTAPSLRRCVCLLLAAILDLARG. The Ig-like 1 domain maps to 25–132; sequence YLTVNIEPLP…RATREKVVLA (108 aa). Residues Cys46 and Cys116 are joined by a disulfide bond. Asn82 and Asn165 each carry an N-linked (GlcNAc...) asparagine glycan. The tract at residues 229 to 259 is disordered; the sequence is LSLLDAENRGGRPYTERPSRGLTPDPNILLQ. Basic and acidic residues predominate over residues 234-247; sequence AENRGGRPYTERPS. The Ig-like 2 domain maps to 344-429; it reads PKIVMTPSRA…GSTDTHTRLI (86 aa). Residues Asn407 and Asn444 are each glycosylated (N-linked (GlcNAc...) asparagine).

Interacts (Ig-like 1 domain) with NRXN2 (via Laminin G-like 1 domain) in a trans-interaction manner.

The protein resides in the postsynaptic cell membrane. In terms of biological role, involved in synaptic inhibition in the brain. Selectively regulates inhibitory presynaptic differentiation through interacting with presynaptic NRXN2. This chain is Immunoglobulin superfamily member 21, found in Homo sapiens (Human).